The chain runs to 320 residues: Holliday junction branch migration complex subunit RuvB (320 aa).

The interval 1-172 (MTANVCLDES…FGIISRLEYY (172 aa)) is large ATPase domain (RuvB-L). ATP contacts are provided by residues Arg12, Gly53, Lys56, Thr57, Thr58, 119 to 121 (EDF), Arg162, Tyr172, and Arg209. A Mg(2+)-binding site is contributed by Thr57. The small ATPAse domain (RuvB-S) stretch occupies residues 173-243 (TPADLARIVA…LASEALGRME (71 aa)). A head domain (RuvB-H) region spans residues 246–320 (ESGLDQMDRK…KAYRHLNLLG (75 aa)). Residues Arg301 and Arg306 each coordinate DNA.

It belongs to the RuvB family. Homohexamer. Forms an RuvA(8)-RuvB(12)-Holliday junction (HJ) complex. HJ DNA is sandwiched between 2 RuvA tetramers; dsDNA enters through RuvA and exits via RuvB. An RuvB hexamer assembles on each DNA strand where it exits the tetramer. Each RuvB hexamer is contacted by two RuvA subunits (via domain III) on 2 adjacent RuvB subunits; this complex drives branch migration. In the full resolvosome a probable DNA-RuvA(4)-RuvB(12)-RuvC(2) complex forms which resolves the HJ.

Its subcellular location is the cytoplasm. It catalyses the reaction ATP + H2O = ADP + phosphate + H(+). Functionally, the RuvA-RuvB-RuvC complex processes Holliday junction (HJ) DNA during genetic recombination and DNA repair, while the RuvA-RuvB complex plays an important role in the rescue of blocked DNA replication forks via replication fork reversal (RFR). RuvA specifically binds to HJ cruciform DNA, conferring on it an open structure. The RuvB hexamer acts as an ATP-dependent pump, pulling dsDNA into and through the RuvAB complex. RuvB forms 2 homohexamers on either side of HJ DNA bound by 1 or 2 RuvA tetramers; 4 subunits per hexamer contact DNA at a time. Coordinated motions by a converter formed by DNA-disengaged RuvB subunits stimulates ATP hydrolysis and nucleotide exchange. Immobilization of the converter enables RuvB to convert the ATP-contained energy into a lever motion, pulling 2 nucleotides of DNA out of the RuvA tetramer per ATP hydrolyzed, thus driving DNA branch migration. The RuvB motors rotate together with the DNA substrate, which together with the progressing nucleotide cycle form the mechanistic basis for DNA recombination by continuous HJ branch migration. Branch migration allows RuvC to scan DNA until it finds its consensus sequence, where it cleaves and resolves cruciform DNA. This chain is Holliday junction branch migration complex subunit RuvB, found in Nitratidesulfovibrio vulgaris (strain ATCC 29579 / DSM 644 / CCUG 34227 / NCIMB 8303 / VKM B-1760 / Hildenborough) (Desulfovibrio vulgaris).